Reading from the N-terminus, the 207-residue chain is Uracil phosphoribosyltransferase (207 aa).

5-phospho-alpha-D-ribose 1-diphosphate is bound by residues Arg-77, Arg-102, and 129 to 137 (DPMLATGVS). Residues Ile-192 and 197 to 199 (GDA) each bind uracil. Residue Asp-198 participates in 5-phospho-alpha-D-ribose 1-diphosphate binding.

This sequence belongs to the UPRTase family. Mg(2+) serves as cofactor.

It carries out the reaction UMP + diphosphate = 5-phospho-alpha-D-ribose 1-diphosphate + uracil. Its pathway is pyrimidine metabolism; UMP biosynthesis via salvage pathway; UMP from uracil: step 1/1. With respect to regulation, allosterically activated by GTP. Its function is as follows. Catalyzes the conversion of uracil and 5-phospho-alpha-D-ribose 1-diphosphate (PRPP) to UMP and diphosphate. This chain is Uracil phosphoribosyltransferase, found in Fervidobacterium nodosum (strain ATCC 35602 / DSM 5306 / Rt17-B1).